We begin with the raw amino-acid sequence, 103 residues long: A-type ATP synthase subunit F (103 aa).

Belongs to the V-ATPase F subunit family. In terms of assembly, has multiple subunits with at least A(3), B(3), C, D, E, F, H, I and proteolipid K(x).

The protein resides in the cell membrane. Its function is as follows. Component of the A-type ATP synthase that produces ATP from ADP in the presence of a proton gradient across the membrane. This chain is A-type ATP synthase subunit F, found in Pyrococcus furiosus (strain ATCC 43587 / DSM 3638 / JCM 8422 / Vc1).